The chain runs to 62 residues: Potassium channel toxin alpha-KTx Tx790 (62 aa).

The signal sequence occupies residues 1 to 18 (MQKLFIVLVLFCILRLDA). 3 disulfides stabilise this stretch: Cys28/Cys46, Cys33/Cys59, and Cys37/Cys61.

Belongs to the short scorpion toxin superfamily. Potassium channel inhibitor family. Alpha-KTx 23 subfamily. As to expression, expressed by the venom gland.

The protein localises to the secreted. In terms of biological role, may block potassium channels. The chain is Potassium channel toxin alpha-KTx Tx790 from Buthus israelis (Israeli scorpion).